We begin with the raw amino-acid sequence, 348 residues long: L-threonine 3-dehydrogenase (348 aa).

A Zn(2+)-binding site is contributed by cysteine 38. Residues threonine 40 and histidine 43 each act as charge relay system in the active site. The Zn(2+) site is built by histidine 63, glutamate 64, cysteine 93, cysteine 96, cysteine 99, and cysteine 107. NAD(+) contacts are provided by residues isoleucine 175, aspartate 195, arginine 200, 263 to 265 (LGI), and 287 to 288 (IY).

It belongs to the zinc-containing alcohol dehydrogenase family. Homotetramer. The cofactor is Zn(2+).

It is found in the cytoplasm. The catalysed reaction is L-threonine + NAD(+) = (2S)-2-amino-3-oxobutanoate + NADH + H(+). The protein operates within amino-acid degradation; L-threonine degradation via oxydo-reductase pathway; glycine from L-threonine: step 1/2. Its function is as follows. Catalyzes the NAD(+)-dependent oxidation of L-threonine to 2-amino-3-ketobutyrate. The chain is L-threonine 3-dehydrogenase from Deinococcus radiodurans (strain ATCC 13939 / DSM 20539 / JCM 16871 / CCUG 27074 / LMG 4051 / NBRC 15346 / NCIMB 9279 / VKM B-1422 / R1).